Consider the following 176-residue polypeptide: Shikimate kinase (176 aa).

ATP is bound at residue Gly14 to Ser19. Ser18 contributes to the Mg(2+) binding site. Residues Asp36, Arg60, and Gly82 each coordinate substrate. Arg120 is an ATP binding site. Position 138 (Arg138) interacts with substrate.

It belongs to the shikimate kinase family. In terms of assembly, monomer. The cofactor is Mg(2+).

It localises to the cytoplasm. It carries out the reaction shikimate + ATP = 3-phosphoshikimate + ADP + H(+). It participates in metabolic intermediate biosynthesis; chorismate biosynthesis; chorismate from D-erythrose 4-phosphate and phosphoenolpyruvate: step 5/7. Functionally, catalyzes the specific phosphorylation of the 3-hydroxyl group of shikimic acid using ATP as a cosubstrate. This chain is Shikimate kinase, found in Dehalococcoides mccartyi (strain ATCC BAA-2100 / JCM 16839 / KCTC 5957 / BAV1).